A 516-amino-acid chain; its full sequence is Multicopper oxidase CueO (516 aa).

The tat-type signal signal peptide spans 1–28 (MQRRDFLKYSVALGVASALPLWSRAVFA). Plastocyanin-like domains are found at residues 55-165 (GQST…IEDD) and 227-292 (PRGW…DNKP). Cu cation contacts are provided by His101, His103, His141, and His143. Positions 355–400 (MDPMLDMMGMQMLMEKYGDQAMAGMDHSQMMGHMGHGNMNHMNHGG) are methionine-rich region. Residues 402–516 (FDFHHANKIN…DTGMMLGFTV (115 aa)) form the Plastocyanin-like 3 domain. Positions 443, 446, 448, 499, 500, 501, and 505 each coordinate Cu cation.

It belongs to the multicopper oxidase family. Monomer. It depends on Cu cation as a cofactor. Post-translationally, exported by the Tat system. The position of the signal peptide cleavage has been experimentally proven.

Its subcellular location is the periplasm. The catalysed reaction is 4 Cu(+) + O2 + 4 H(+) = 4 Cu(2+) + 2 H2O. Ferroxidase and phenoloxidase activities are enhanced considerably in the presence of excess copper ions. A labile regulatory copper ion near the T1 copper site is important for the copper associated activation of enzyme activity. Ag(+) acts as a potent inhibitor of oxidase activity by binding at Cu(+) binding sites, blocking Cu(+) substrate binding and oxidation. pPD oxidase activity is strongly inhibited by sodium azide, an inhibitor of the electron transfer. Its function is as follows. Multicopper oxidase involved in copper homeostasis and copper tolerance under aerobic conditions. Is responsible for the oxidation of Cu(+) to the less harmful Cu(2+) in the periplasm, thereby preventing Cu(+) from entering the cytoplasm. Probably primarily functions as a cuprous oxidase in vivo. In vitro, in the presence of excess copper ions, exhibits ferroxidase and phenoloxidase activities. Fe(2+) is an excellent substrate in the presence of excess Cu(2+), but is inactive in the absence of Cu(2+). Oxidizes the phenolate iron siderophores enterobactin, 2,3-dihydroxybenzoate (2,3-DHB) and 3-hydroxyanthranilate (3-HAA). Oxidation and thus inactivation of enterobactin could protect cells from the interaction of enterobactin with copper and play a central role as an interface between copper detoxification and iron homeostasis. Also oxidizes a variety of phenolic model substrates, including 2,2'-azinobis(3-ethylbenzthiazolinesulfonic acid) (ABTS), p-phenylenediamine (pPD), 2,6-dimethoxyphenol (2,6-DMP) and 3,4-dihydroxybenzoic acid (3,4-DHB). The sequence is that of Multicopper oxidase CueO from Escherichia coli (strain K12).